The primary structure comprises 345 residues: Growth hormone-inducible transmembrane protein (345 aa).

The transit peptide at 1–45 directs the protein to the mitochondrion; the sequence is MLAARLVCLRTLPSRVFHPAFTKASPVVKNSITKNQWLLTPSREY. The Mitochondrial matrix portion of the chain corresponds to 46–82; sequence ATKTRIGIRRGRTGQELKEAALEPSMEKIFKIDQMGR. Residues 83 to 103 form a helical membrane-spanning segment; sequence WFVAGGAAVGLGALCYYGLGL. Residues 104-125 lie on the Mitochondrial intermembrane side of the membrane; sequence SNEIGAIEKAVIWPQYVKDRIH. A helical membrane pass occupies residues 126–146; that stretch reads STYMYLAGSIGLTALSAIAIS. At 147–159 the chain is on the mitochondrial matrix side; sequence RTPVLMNFMMRGS. The chain crosses the membrane as a helical span at residues 160–180; sequence WVTIGVTFAAMVGAGMLVRSI. The Mitochondrial intermembrane segment spans residues 181–190; that stretch reads PYDQSPGPKH. The chain crosses the membrane as a helical span at residues 191-211; the sequence is LAWLLHSGVMGAVVAPLTILG. Over 212 to 213 the chain is Mitochondrial matrix; that stretch reads GP. The chain crosses the membrane as a helical span at residues 214-234; it reads LLIRAAWYTAGIVGGLSTVAM. Residues 235–244 are Mitochondrial intermembrane-facing; that stretch reads CAPSEKFLNM. Residues 245 to 265 traverse the membrane as a helical segment; sequence GAPLGVGLGLVFVSSLGSMFL. Residues 266 to 271 are Mitochondrial matrix-facing; it reads PPTTVA. Residues 272-292 form a helical membrane-spanning segment; sequence GATLYSVAMYGGLVLFSMFLL. The Mitochondrial intermembrane segment spans residues 293 to 345; sequence YDTQKVIKRAEVSPMYGVQKYDPINSMLSIYMDTLNIFMRVATMLATGGNRKK.

It belongs to the BI1 family. Interacts with LETM1. Interacts with AFG3L2. Undergoes AFG3L2-mediated proteolytic degradation, upon hyperpolarization of mitochondria.

It is found in the mitochondrion inner membrane. It catalyses the reaction Ca(2+)(in) + 2 H(+)(out) = Ca(2+)(out) + 2 H(+)(in). The enzyme catalyses K(+)(in) + H(+)(out) = K(+)(out) + H(+)(in). Functionally, plays an important role in maintenance of mitochondrial morphology and in mediating either calcium or potassium/proton antiport. Mediates proton-dependent calcium efflux from mitochondrion. Also functions as an electroneutral mitochondrial proton/potassium exchanger. Required for the mitochondrial tubular network and cristae organization. Involved in apoptotic release of cytochrome c. Inhibits the proteolytic activity of AFG3L2, stimulating respiration and stabilizing respiratory enzymes in actively respiring mitochondria. However, when mitochondria become hyperpolarized, GHITM loses its inhibitory activity toward AFG3L2 and the now the active AFG3L2 turns first on GHITM and, if hyperpolarization persists, on other proteins of the mitochondria, leading to a broad remodeling of the mitochondrial proteome. In Homo sapiens (Human), this protein is Growth hormone-inducible transmembrane protein (GHITM).